The sequence spans 313 residues: D-alanine--D-alanine ligase (313 aa).

In terms of domain architecture, ATP-grasp spans Lys108 to Ala308. Val138–Tyr193 provides a ligand contact to ATP. Mg(2+)-binding residues include Asp262, Glu275, and Asn277.

This sequence belongs to the D-alanine--D-alanine ligase family. Mg(2+) is required as a cofactor. Mn(2+) serves as cofactor.

It localises to the cytoplasm. It carries out the reaction 2 D-alanine + ATP = D-alanyl-D-alanine + ADP + phosphate + H(+). It participates in cell wall biogenesis; peptidoglycan biosynthesis. Cell wall formation. In Burkholderia ambifaria (strain ATCC BAA-244 / DSM 16087 / CCUG 44356 / LMG 19182 / AMMD) (Burkholderia cepacia (strain AMMD)), this protein is D-alanine--D-alanine ligase.